Reading from the N-terminus, the 264-residue chain is tRNA pseudouridine synthase A (264 aa).

Asp-51 serves as the catalytic Nucleophile. A substrate-binding site is contributed by Tyr-109.

It belongs to the tRNA pseudouridine synthase TruA family. In terms of assembly, homodimer.

The catalysed reaction is uridine(38/39/40) in tRNA = pseudouridine(38/39/40) in tRNA. Formation of pseudouridine at positions 38, 39 and 40 in the anticodon stem and loop of transfer RNAs. The polypeptide is tRNA pseudouridine synthase A (Actinobacillus succinogenes (strain ATCC 55618 / DSM 22257 / CCUG 43843 / 130Z)).